The following is a 472-amino-acid chain: Cell division protein FtsP (472 aa).

A signal peptide (tat-type signal) is located at residues 1–27 (MSLSRRQFIQASGIALCAGAMPLTARA).

Belongs to the FtsP family. In terms of processing, predicted to be exported by the Tat system. The position of the signal peptide cleavage has not been experimentally proven.

The protein resides in the periplasm. Cell division protein that is required for growth during stress conditions. May be involved in protecting or stabilizing the divisomal assembly under conditions of stress. The sequence is that of Cell division protein FtsP from Dickeya dadantii (strain 3937) (Erwinia chrysanthemi (strain 3937)).